The sequence spans 489 residues: Glycogen synthase (489 aa).

Residue K15 coordinates ADP-alpha-D-glucose.

This sequence belongs to the glycosyltransferase 1 family. Bacterial/plant glycogen synthase subfamily.

The catalysed reaction is [(1-&gt;4)-alpha-D-glucosyl](n) + ADP-alpha-D-glucose = [(1-&gt;4)-alpha-D-glucosyl](n+1) + ADP + H(+). Its pathway is glycan biosynthesis; glycogen biosynthesis. In terms of biological role, synthesizes alpha-1,4-glucan chains using ADP-glucose. In Francisella tularensis subsp. mediasiatica (strain FSC147), this protein is Glycogen synthase.